Consider the following 698-residue polypeptide: Transferrin-binding protein B (698 aa).

Positions 1 to 20 (MNNPLVNQAAMVLPVFLLSA) are cleaved as a signal peptide. Cys-21 carries the N-palmitoyl cysteine lipid modification. Residue Cys-21 is the site of S-diacylglycerol cysteine attachment. 6 disordered regions span residues 33–58 (VDTE…QKDQ), 83–102 (IKLS…KNPS), 294–324 (FSGK…SLSG), 349–383 (GSAK…SENS), 428–479 (ESGK…GDAN), and 669–698 (TKNA…KPVQ). A compositionally biased stretch (polar residues) spans 46 to 56 (DVSSEKPQAQK). A compositionally biased stretch (basic and acidic residues) spans 299–315 (EATDKPKNDGETKEHPF). Residues 369 to 383 (AAASNGAAGTSSENS) are compositionally biased toward low complexity. Residues 460 to 476 (QAGTAENGNPAASNTAG) are compositionally biased toward polar residues. Over residues 671-686 (NATDASGNGNSASSAT) the composition is skewed to low complexity.

Belongs to the TbpB family. In terms of assembly, binds only human holo-transferrin (TF), via the TF C-terminus. Forms a large complex with TbpA and TF. Interacts via its C-terminal domain with Slam1.

It localises to the cell outer membrane. The protein localises to the cell surface. Neisseria acquires iron by extracting it from serum transferrin (TF) in its human host. Acts as a TF receptor and is required for TF utilization. Involved in the initial capture of TF. Helps select only those TF molecules that can be used as an iron source and concentrates them on the cell surface, maintaining the iron-loaded status of the TF C-terminal lobe until its delivery to TbpA. This Neisseria meningitidis serogroup A / serotype 4A (strain DSM 15465 / Z2491) protein is Transferrin-binding protein B.